Consider the following 196-residue polypeptide: ECF RNA polymerase sigma factor SigM (196 aa).

The interval 39–105 (LFRRHHRQLH…ACLDRLRRAK (67 aa)) is sigma-70 factor domain-2. The short motif at 63-66 (DALQ) is the Polymerase core binding element. Positions 130–181 (AVQRALMRLPVEQRAAVVAVDMQGYSIADTARMLGVAEGTVKSRCARARARL) are sigma-70 factor domain-4. Positions 156 to 175 (IADTARMLGVAEGTVKSRCA) form a DNA-binding region, H-T-H motif.

Belongs to the sigma-70 factor family. ECF subfamily. As to quaternary structure, interacts transiently with the RNA polymerase catalytic core formed by RpoA, RpoB, RpoC and RpoZ (2 alpha, 1 beta, 1 beta' and 1 omega subunit) to form the RNA polymerase holoenzyme that can initiate transcription. Interacts (via sigma-70 factor domain-4) with anti-sigma-M factor RsmA (AC L7N5D7).

Sigma factors are initiation factors that promote the attachment of RNA polymerase to specific initiation sites and are then released. Extracytoplasmic function (ECF) sigma factors are held in an inactive form by an anti-sigma factor (RsaM, AC L7N5D7) until released by regulated intramembrane proteolysis. This sigma factor is required for the synthesis of surface or secreted molecules. The sequence is that of ECF RNA polymerase sigma factor SigM (sigM) from Mycobacterium tuberculosis (strain ATCC 25618 / H37Rv).